A 73-amino-acid chain; its full sequence is Myosin-IB light chain (73 aa).

2 EF-hand domains span residues 3–38 and 38–73; these read DEKT…GLPM and MTEA…VDES. 4 residues coordinate Ca(2+): Asp16, Asp18, Asp20, and Glu27.

As to quaternary structure, myosin I is a dimer of a heavy and a light chain. Inability to self-assemble into filaments. Interacts with myoB. Does not interact with myoC or myoD.

Functionally, functions as the light chain for myosin-B. Binds calcium with submicromolar affinity and may sense physiological calcium changes. In Dictyostelium discoideum (Social amoeba), this protein is Myosin-IB light chain (mlcB).